Reading from the N-terminus, the 331-residue chain is Probable tRNA pseudouridine synthase B (331 aa).

The segment covering 1–15 (MRCSQREVFVKREEP) has biased composition (basic and acidic residues). The tract at residues 1–27 (MRCSQREVFVKREEPTNPEWGKPPSQR) is disordered. Aspartate 71 functions as the Nucleophile in the catalytic mechanism. The 76-residue stretch at 238 to 313 (LPKIWVRDSA…AVVRTDRVVM (76 aa)) folds into the PUA domain.

It belongs to the pseudouridine synthase TruB family. Type 2 subfamily.

It carries out the reaction uridine(55) in tRNA = pseudouridine(55) in tRNA. Could be responsible for synthesis of pseudouridine from uracil-55 in the psi GC loop of transfer RNAs. In Pyrobaculum arsenaticum (strain DSM 13514 / JCM 11321 / PZ6), this protein is Probable tRNA pseudouridine synthase B.